Here is a 440-residue protein sequence, read N- to C-terminus: tRNA-2-methylthio-N(6)-dimethylallyladenosine synthase (440 aa).

The MTTase N-terminal domain maps to 5–121 (KKLYIKTYGC…LPEMEAKAGT (117 aa)). Positions 14, 50, 84, 159, 163, and 166 each coordinate [4Fe-4S] cluster. One can recognise a Radical SAM core domain in the interval 145–378 (AKRGPTAFLT…LTRQQREVQD (234 aa)). The TRAM domain occupies 378–440 (DSMVGRELGV…ANSLAGELID (63 aa)).

The protein belongs to the methylthiotransferase family. MiaB subfamily. In terms of assembly, monomer. Requires [4Fe-4S] cluster as cofactor.

Its subcellular location is the cytoplasm. It catalyses the reaction N(6)-dimethylallyladenosine(37) in tRNA + (sulfur carrier)-SH + AH2 + 2 S-adenosyl-L-methionine = 2-methylsulfanyl-N(6)-dimethylallyladenosine(37) in tRNA + (sulfur carrier)-H + 5'-deoxyadenosine + L-methionine + A + S-adenosyl-L-homocysteine + 2 H(+). In terms of biological role, catalyzes the methylthiolation of N6-(dimethylallyl)adenosine (i(6)A), leading to the formation of 2-methylthio-N6-(dimethylallyl)adenosine (ms(2)i(6)A) at position 37 in tRNAs that read codons beginning with uridine. This chain is tRNA-2-methylthio-N(6)-dimethylallyladenosine synthase, found in Ruegeria sp. (strain TM1040) (Silicibacter sp.).